We begin with the raw amino-acid sequence, 195 residues long: Iron-sulfur flavoprotein AF_1519 (195 aa).

Residues C45, C48, C51, and C57 each contribute to the [4Fe-4S] cluster site.

The protein belongs to the SsuE family. Isf subfamily. As to quaternary structure, homodimer. FMN is required as a cofactor. It depends on [4Fe-4S] cluster as a cofactor.

Functionally, redox-active protein probably involved in electron transport. The protein is Iron-sulfur flavoprotein AF_1519 of Archaeoglobus fulgidus (strain ATCC 49558 / DSM 4304 / JCM 9628 / NBRC 100126 / VC-16).